The chain runs to 2136 residues: Protein CELLULOSE SYNTHASE INTERACTIVE 3 (2136 aa).

42 ARM repeats span residues 27 to 66 (MEMD…LLGI), 71 to 111 (REAR…VLCK), 113 to 152 (KDLR…EVSS), 159 to 201 (HIGM…NLCG), 204 to 243 (DGYW…RLVL), 246 to 286 (CDSI…ALSA), 289 to 337 (DEAK…NVFG), 376 to 417 (PESS…SLYG), 419 to 458 (SSLS…GLCH), 461 to 500 (VGIW…ILTA), 503 to 542 (DDSK…NLCC), 545 to 584 (EEIR…KLVH), 586 to 618 (ADPA…HVLS), 619 to 663 (KASQ…DLFS), 666 to 705 (QDIC…ALSR), 711 to 750 (NNKK…NLLS), 752 to 791 (PDIA…QLLK), 811 to 848 (SLVD…FSYP), 849 to 887 (PWIA…RLCS), 936 to 980 (QLIT…GFLE), 1013 to 1041 (SVDA…YTSS), 1042 to 1083 (AQAE…TLAV), 1109 to 1149 (RGIN…SLVK), 1163 to 1204 (EDVR…RIAD), 1207 to 1247 (DTNK…VLFS), 1249 to 1288 (HELR…ELFD), 1290 to 1329 (ENIR…KLSS), 1333 to 1375 (SNTA…VVFS), 1377 to 1416 (KNIR…ILLD), 1418 to 1457 (EQHL…KLGK), 1460 to 1499 (VPRK…ILTN), 1518 to 1546 (AVLL…KQQT), 1547 to 1585 (LEAF…HFLT), 1587 to 1626 (EDFQ…KISA), 1628 to 1669 (WPKA…NILQ), 1670 to 1704 (YDAE…ALML), 1710 to 1750 (ASST…NNPR), 1790 to 1833 (SQHE…NFVM), 1836 to 1875 (RTNR…FLFS), 1921 to 1960 (PKLR…LLRH), 1969 to 2008 (VAKS…CLPG), and 2010 to 2035 (LTVN…QLTI). The C2 domain maps to 1989–2106 (KTCPPRFHDK…VTEGEYSGSL (118 aa)).

As to quaternary structure, associates with cellulase synthase (CESA) complexes. Binds to cortical microtubules. Interacts with CESA3 and CESA6. Expressed in dark-grown hypocotyls, leaves (confined to vasculature and trichomes), stamen, pollen, developing siliques, and roots. Restricted in meristematic tissue of the shoot and root. Present in distinct punctae at the cell cortex, called microtubule-associated cellulose synthase compartments, that move with constant velocities of 10 to 3000 nm/min.

The protein resides in the cell membrane. It localises to the cytoplasm. The protein localises to the cytoskeleton. It is found in the endomembrane system. Regulator of the microtubular cytoskeleton. Microtubule-associated protein involved in the association of cellulase synthase (CESA) complexes (CSCs) and cortical microtubules. Promotes dynamics of CSCs in the plasma membrane in both microtubules-dependent and microtubules-independent manners. Regulates primary cell wall biosynthesis and cellulose microfibrils organization. The sequence is that of Protein CELLULOSE SYNTHASE INTERACTIVE 3 from Arabidopsis thaliana (Mouse-ear cress).